A 962-amino-acid chain; its full sequence is Cohesin subunit psc3 (962 aa).

Residues 1-72 (MSESVTTGSD…GVNVKRSRRN (72 aa)) are disordered. Positions 21–30 (VMLSQSFDPM) are enriched in polar residues. The segment covering 51–71 (SSKKRHPRPNSKGVNVKRSRR) has biased composition (basic residues). The stretch at 236–275 (LCEKSKELLNEHAIATKQLEKEEKRSRVNRNRINELNNSL) forms a coiled coil. Residues 297–382 (FVHRYRDVEP…SRFKERILEM (86 aa)) enclose the SCD domain.

This sequence belongs to the SCC3 family. As to quaternary structure, cohesin complexes are composed of the psm1/smc1 and psm3/smc3 heterodimer attached via their hinge domain, rad21/scc1 which link them, and psc3/scc3, which interacts with rad21. Interacts with swi6. The interaction with swi6 may contribute to recruit cohesin complex to heterochromatin.

It is found in the nucleus. The protein resides in the chromosome. The protein localises to the centromere. In terms of biological role, component of cohesin complex, a complex required for the cohesion of sister chromatids after DNA replication. The cohesin complex apparently forms a large proteinaceous ring within which sister chromatids can be trapped. At anaphase, the rad21 subunit of the cohesin complex is cleaved and dissociates from chromatin, allowing sister chromatids to segregate. The cohesin complex may also play a role in spindle pole assembly during mitosis. The sequence is that of Cohesin subunit psc3 (psc3) from Schizosaccharomyces pombe (strain 972 / ATCC 24843) (Fission yeast).